Consider the following 634-residue polypeptide: Probable sulfate transporter 3.5 (634 aa).

A compositionally biased stretch (polar residues) spans 1–12; the sequence is MENTITSSTSSP. Residues 1-25 are disordered; the sequence is MENTITSSTSSPKGRGVNFSTPRGF. Over 1-81 the chain is Cytoplasmic; it reads MENTITSSTS…KYDMQKLKYD (81 aa). The chain crosses the membrane as a helical span at residues 82–102; the sequence is VLAGITITSLAVPQGISYAKL. The Extracellular portion of the chain corresponds to 103-104; the sequence is AS. A helical transmembrane segment spans residues 105 to 125; that stretch reads IPPIIGLYSSFVPPFVYAVFG. Topologically, residues 126–130 are cytoplasmic; it reads SSNNL. Residues 131–151 form a helical membrane-spanning segment; sequence AVGTVAACSLLIAETFGEEMI. Residues 152–158 are Extracellular-facing; it reads KNEPELY. Residues 159–179 form a helical membrane-spanning segment; sequence LHLIFTATLITGLFQFAMGFL. The Cytoplasmic segment spans residues 180–195; sequence RLGILVDFLSHSTITG. The helical transmembrane segment at 196–216 threads the bilayer; it reads FMGGTAIIILLQQLKGIFGLV. The Extracellular portion of the chain corresponds to 217–239; that stretch reads HFTHKTDVVSVLHSILDNRAEWK. A helical membrane pass occupies residues 240–260; the sequence is WQSTLAGVCFLVFLQSTRYIK. The Cytoplasmic segment spans residues 261-265; it reads QRYPK. The helical transmembrane segment at 266–286 threads the bilayer; the sequence is LFWVSAMGPMVVVVVGCVVAY. The Extracellular segment spans residues 287 to 321; it reads LVKGTAHGIATVGPLKKGLNPPSIQLLNFDSKYLG. Residues 322-342 traverse the membrane as a helical segment; that stretch reads MVFKAGIVTGLIALAEGIAIG. The Cytoplasmic segment spans residues 343–358; the sequence is RSFAVMKNEQTDGNKE. Residues 359–379 form a helical membrane-spanning segment; it reads MIAFGLMNVIGSFTSCYLTTG. The Extracellular portion of the chain corresponds to 380–395; that stretch reads PFSKTAVNYNAGTKTP. The chain crosses the membrane as a helical span at residues 396-416; it reads MSNVVMGVCMMLVLLFLAPLF. Residues 417–420 are Cytoplasmic-facing; the sequence is SYTP. The helical transmembrane segment at 421 to 441 threads the bilayer; sequence LVGLSAIIMSAMLGLINYEEM. Residues 442–458 are Extracellular-facing; the sequence is YHLFKVDKFDFLVCMSA. Residues 459 to 479 form a helical membrane-spanning segment; that stretch reads FFGVSFLSMDYGLIISVGFSI. At 480-634 the chain is on the cytoplasmic side; the sequence is VRALLYVARP…FNLTTTKPEV (155 aa). In terms of domain architecture, STAS spans 508-623; sequence QYPASEEMLG…LSIDDAVQAC (116 aa).

Belongs to the SLC26A/SulP transporter (TC 2.A.53) family.

Its subcellular location is the membrane. In terms of biological role, h(+)/sulfate cotransporter that may play a role in the regulation of sulfate assimilation. The protein is Probable sulfate transporter 3.5 (SULTR3;5) of Arabidopsis thaliana (Mouse-ear cress).